The chain runs to 197 residues: Phosphoheptose isomerase (197 aa).

The SIS domain maps to 36–197; that stretch reads LVHSLAQGGK…VDSLLLGVEE (162 aa). Residue 51–53 participates in substrate binding; it reads NGG. His60 and Glu64 together coordinate Zn(2+). Substrate is bound by residues Glu64, 93-94, 119-121, Ser124, and Gln174; these read ND and STS. 2 residues coordinate Zn(2+): Gln174 and His182.

It belongs to the SIS family. GmhA subfamily. As to quaternary structure, homotetramer. It depends on Zn(2+) as a cofactor.

The protein localises to the cytoplasm. It catalyses the reaction 2 D-sedoheptulose 7-phosphate = D-glycero-alpha-D-manno-heptose 7-phosphate + D-glycero-beta-D-manno-heptose 7-phosphate. It participates in carbohydrate biosynthesis; D-glycero-D-manno-heptose 7-phosphate biosynthesis; D-glycero-alpha-D-manno-heptose 7-phosphate and D-glycero-beta-D-manno-heptose 7-phosphate from sedoheptulose 7-phosphate: step 1/1. Catalyzes the isomerization of sedoheptulose 7-phosphate in D-glycero-D-manno-heptose 7-phosphate. This Thiobacillus denitrificans (strain ATCC 25259 / T1) protein is Phosphoheptose isomerase.